Here is a 536-residue protein sequence, read N- to C-terminus: MKTENLIVTTVKVEPLNYASQSFGDNNIYGGATKKQRLESDEWMNHNQTNMNLESSNMNHNTISGFSSPDVNYEAYSPNSKLDDGNMSVHMGDGLDGKKSSSKKGPVPRQQEELCLVCGDRASGYHYNALTCEGCKGFFRRSVTKNAVYCCKFGHECEMDMYMRRKCQECRLKKCLAVGMRPECVVPENQCAIKRKEKKAQKEKDKVPGIVGSNTSSSSLLNQSLNNGSLKNLEISYREELLEQLMKCDPPPHPMQQLLPEKLLMENRAKGTPQLTANQVAVIYKLIWYQDGYEQPSEEDLKRITTELEEEEDQEHEANFRYITEVTILTVQLIVEFAKGLPAFIKIPQEDQITLLKACSSEVMMLRMARRYDHDSDSILFANNTAYTKQTYQLAGMEETIDDLLHFCRQMYALSIDNVEYALLTAIVIFSDRPGLEKAEMVDIIQSYYTETLKVYIVNRHGGESRCSVQFAKLLGILTELRTMGNKNSEMCFSLKLRNRKLPRFLEEVWDVGDVNNQTTATTNTENIVRERINRN.

The modulating stretch occupies residues Met-1–Leu-114. Residues Ser-77–Val-107 form a disordered region. 2 NR C4-type zinc fingers span residues Cys-115 to Cys-135 and Cys-151 to Cys-175. Residues Cys-115–Pro-187 constitute a DNA-binding region (nuclear receptor). Residues Asn-278 to Asp-514 enclose the NR LBD domain.

The protein belongs to the nuclear hormone receptor family. NR1 subfamily.

It localises to the nucleus. Its function is as follows. Receptor for ecdysone. Binds to ecdysone response elements (ECRES). The protein is Ecdysone receptor (EcR) of Chironomus tentans (Midge).